The following is a 260-amino-acid chain: Snake venom serine protease homolog (260 aa).

An N-terminal signal peptide occupies residues 1-18; sequence MVLVRVLANLLMLQLSYA. The propeptide occupies 19–24; that stretch reads QKSSEL. The Peptidase S1 domain occupies 25–251; that stretch reads IIGGDECNIN…HLNWIQSIIA (227 aa). Intrachain disulfides connect cysteine 31/cysteine 165, cysteine 52/cysteine 68, cysteine 100/cysteine 258, cysteine 144/cysteine 212, cysteine 176/cysteine 191, and cysteine 202/cysteine 227. N-linked (GlcNAc...) asparagine glycans are attached at residues asparagine 123 and asparagine 124. Asparagine 253 carries an N-linked (GlcNAc...) asparagine glycan.

The protein belongs to the peptidase S1 family. Snake venom subfamily. As to expression, expressed by the venom gland.

Its subcellular location is the secreted. Functionally, snake venom serine protease homolog that may act in the hemostasis system of the prey. In Protobothrops jerdonii (Jerdon's pitviper), this protein is Snake venom serine protease homolog.